A 198-amino-acid chain; its full sequence is UPF0312 protein PFL_5802 (198 aa).

The signal sequence occupies residues 1–23 (MLKKTLAALAIGSAVLAAGQVMA).

This sequence belongs to the UPF0312 family. Type 1 subfamily.

Its subcellular location is the periplasm. This Pseudomonas fluorescens (strain ATCC BAA-477 / NRRL B-23932 / Pf-5) protein is UPF0312 protein PFL_5802.